The following is a 418-amino-acid chain: Tryptophan synthase beta chain (418 aa).

Residues 1 to 12 (MTSTLPTANTPD) show a composition bias toward polar residues. Residues 1–21 (MTSTLPTANTPDPASLMPSVR) form a disordered region. At K111 the chain carries N6-(pyridoxal phosphate)lysine.

It belongs to the TrpB family. As to quaternary structure, tetramer of two alpha and two beta chains. Pyridoxal 5'-phosphate serves as cofactor.

The catalysed reaction is (1S,2R)-1-C-(indol-3-yl)glycerol 3-phosphate + L-serine = D-glyceraldehyde 3-phosphate + L-tryptophan + H2O. It functions in the pathway amino-acid biosynthesis; L-tryptophan biosynthesis; L-tryptophan from chorismate: step 5/5. In terms of biological role, the beta subunit is responsible for the synthesis of L-tryptophan from indole and L-serine. The sequence is that of Tryptophan synthase beta chain from Synechococcus sp. (strain CC9311).